The sequence spans 309 residues: Ribonuclease Z (309 aa).

Zn(2+)-binding residues include His-63, His-65, Asp-67, His-68, His-145, Asp-216, and His-274. Catalysis depends on Asp-67, which acts as the Proton acceptor.

It belongs to the RNase Z family. Homodimer. Requires Zn(2+) as cofactor.

It carries out the reaction Endonucleolytic cleavage of RNA, removing extra 3' nucleotides from tRNA precursor, generating 3' termini of tRNAs. A 3'-hydroxy group is left at the tRNA terminus and a 5'-phosphoryl group is left at the trailer molecule.. Functionally, zinc phosphodiesterase, which displays some tRNA 3'-processing endonuclease activity. Probably involved in tRNA maturation, by removing a 3'-trailer from precursor tRNA. The polypeptide is Ribonuclease Z (Streptococcus sanguinis (strain SK36)).